Consider the following 614-residue polypeptide: Male-specific lethal 1 homolog (614 aa).

Disordered regions lie at residues 1 to 127 and 147 to 217; these read MTMR…GCSP and KEPT…GASS. 2 positions are modified to phosphoserine: serine 66 and serine 126. Over residues 158–169 the composition is skewed to low complexity; it reads GAASPAATASDP. Over residues 170–184 the composition is skewed to pro residues; the sequence is AGPPPLPLPGPPPLA. Residues 185 to 194 are compositionally biased toward low complexity; that stretch reads PTATAGTLAA. Phosphoserine is present on serine 205. Residues 213 to 282 adopt a coiled-coil conformation; it reads SGASSQAACL…KDNEKERHKL (70 aa). The interaction with MSL2 stretch occupies residues 223-237; that stretch reads KQILLLQLDLIEQQQ. Basic and acidic residues-rich tracts occupy residues 272 to 281 and 294 to 304; these read KKDNEKERHK and TELSEKIKLEC. Residues 272-420 form a disordered region; that stretch reads KKDNEKERHK…PKEKAFSSEI (149 aa). Lysine 301 participates in a covalent cross-link: Glycyl lysine isopeptide (Lys-Gly) (interchain with G-Cter in SUMO2). Positions 317–346 match the Nuclear localization signal motif; the sequence is PKPFSCGRSGKGHKRKSPFGSTERKTPVKK. N6-acetyllysine is present on lysine 353. Glycyl lysine isopeptide (Lys-Gly) (interchain with G-Cter in SUMO2) cross-links involve residues lysine 365 and lysine 378. Over residues 376–392 the composition is skewed to basic and acidic residues; it reads VCKRELRSQETPEKPRS. Serine 393 carries the phosphoserine modification. Residues 393–407 show a composition bias toward polar residues; the sequence is SVDTPPRLSTPQKGP. Threonine 396 bears the Phosphothreonine mark. Serine 442 is subject to Phosphoserine. Residues 472–591 form the PEHE domain; sequence VLAVPSWRDH…LTPQNFELPW (120 aa). An interaction with KAT8 HAT domain region spans residues 496 to 514; sequence ENLDDSVFSKRHAKLELDE. The short motif at 505 to 519 is the Bipartite nuclear localization signal element; that stretch reads KRHAKLELDEKRRKR. Positions 550–591 are sufficient for interaction with MSL3 MRG domain; sequence EVTSFFPEPDDVESLMITPFLPVVAFGRPLPKLTPQNFELPW.

Belongs to the msl-1 family. As to quaternary structure, component of a multisubunit histone acetyltransferase complex (MSL) at least composed of the KAT8/MOF/MYST1, MSL1/hampin, MSL2 and MSL3. Forms a MSL heterotetrameric core with MSL2. Interacts (via PEHE domain) with KAT8 (via HAT domain) and MSL3 (via MRG domain); both interactions are direct. Directly interacts with NUPR1. Interacts with TP53BP1; this interaction may be required for MSL1 DNA repair activity, but not for histone acetyltransferase activity. Interacts with TTC4, ECM2 and PIHD1. Sumoylated with SUMO1.

The protein resides in the nucleus. The protein localises to the nucleoplasm. Its subcellular location is the nucleus speckle. Non-catalytic component of the MSL histone acetyltransferase complex, a multiprotein complex that mediates the majority of histone H4 acetylation at 'Lys-16' (H4K16ac), an epigenetic mark that prevents chromatin compaction. The MSL complex is required for chromosome stability and genome integrity by maintaining homeostatic levels of H4K16ac. The MSL complex is also involved in gene dosage by promoting up-regulation of genes expressed by the X chromosome. X up-regulation is required to compensate for autosomal biallelic expression. The MSL complex also participates in gene dosage compensation by promoting expression of Tsix non-coding RNA. Within the MSL complex, acts as a scaffold to tether MSL3 and KAT8 together for enzymatic activity regulation. Greatly enhances MSL2 E3 ubiquitin ligase activity, promoting monoubiquitination of histone H2B at 'Lys-34' (H2BK34Ub). This modification in turn stimulates histone H3 methylation at 'Lys-4' (H3K4me) and 'Lys-79' (H3K79me) and leads to gene activation, including that of HOXA9 and MEIS1. This Homo sapiens (Human) protein is Male-specific lethal 1 homolog.